The primary structure comprises 807 residues: MQFFGRLVNTLSSVTNLFSNPFRVKEVSLADYASSERVREEGQLILLQNASNRTWDCVLVSPRNPQSGFRLFQLESEADALVNFQQYSSQLPPFYESSVQVLHVEVLQHLTDLIRNHPSWTVTHLAVELGIRECFHHSRIISCANSTENEEGCTPLHLACRKGDSEILVELVQYCHAQMDVTDNKGETAFHYAVQGDNPQVLQLLGKNASAGLNQVNNQGLTPLHLACQMGKQEMVRVLLLCNARCNIMGPGGFPIHTAMKFSQKGCAEMIISMDSNQIHSKDPRYGASPLHWAKNAEMARMLLKRGCDVDSTSASGNTALHVAVTRNRFDCVMVLLTYGANAGARGEHGNTPLHLAMSKDNMEMVKALIVFGAEVDTPNDFGETPAFIASKISKLITRKALLTLLKTVGADYHFPFIQGVSTEQSSAAGPHPFFSLDRTQPPTISLNNLELQDLMPVSRARKPAFILSSMRDEKRSHDHLLCLDGGGVKGLVIIQLLIAIEKASGVATKDLFDWVAGTSTGGILALAILHSKSMAYMRGVYFRMKDEVFRGSRPYESGPLEEFLKREFGEHTKMTDVKKPKVMLTGTLSDRQPAELHLFRNYDAPEAVREPRCTPNINLKPPTQPADQLVWRAARSSGAAPTYFRPNGRFLDGGLLANNPTLDAMTEIHEYNQDMIRKGQGNKVKKLSIVVSLGTGKSPQVPVTCVDVFRPSNPWELAKTVFGAKELGKMVVDCCTDPDGRAVDRARAWCEMVGIQYFRLNPQLGSDIMLDEVSDAVLVNALWETEVYIYEHREEFQKLVQLLLSP.

Residue Ser13 is modified to Phosphoserine. ANK repeat units lie at residues 120–147 (WTVT…ANST), 151–181 (EGCT…QMDV), 185–215 (KGET…GLNQ), 219–248 (QGLT…RCNI), 251–281 (PGGF…QIHS), 286–312 (YGAS…DVDS), 316–345 (SGNT…NAGA), 349–378 (HGNT…EVDT), and 382–403 (FGET…KALL). A run of 2 helical transmembrane segments spans residues 481-501 (LLCL…LIAI) and 512-532 (LFDW…ILHS). The region spanning 482-666 (LCLDGGGVKG…LANNPTLDAM (185 aa)) is the PNPLA domain. The GXGXXG motif lies at 486–491 (GGGVKG). The GXSXG motif lies at 518 to 522 (GTSTG). Residue Ser520 is the Nucleophile of the active site. The active-site Proton acceptor is the Asp653. The DGA/G signature appears at 653–655 (DGG). The segment at 678–687 (RKGQGNKVKK) is calmodulin-binding (1-9-14 motif). Positions 749–760 (AWCEMVGIQYFR) are calmodulin-binding (IQ motif).

Homodimer formed by catalytic domains tightly interacting through a large hydrophobic interface. The contact area involves 3 alpha helices, several loops and a part of the beta sheet from each monomer. Both active sites of the dimer are in close proximity adopting an open conformation that provide sufficient space for phospholipid access and favoring cooperativity in deacylation-reacylation reactions. Each monomer has 9 ankyrin repeats stacked side-by-side in an elongated structure oriented outwards from the catalytic core. Expressed in pancreatic beta-cells. Expressed in skeletal muscle (at protein level).

Its subcellular location is the cytoplasm. The protein resides in the cell membrane. It is found in the mitochondrion. The protein localises to the cell projection. It localises to the pseudopodium. It carries out the reaction a 1,2-diacyl-sn-glycero-3-phosphocholine + H2O = a 1-acyl-sn-glycero-3-phosphocholine + a fatty acid + H(+). The catalysed reaction is a 1-O-alkyl-2-acyl-sn-glycero-3-phosphocholine + H2O = a 1-O-alkyl-sn-glycero-3-phosphocholine + a fatty acid + H(+). It catalyses the reaction 1,2-dihexadecanoyl-sn-glycero-3-phosphocholine + H2O = 1-hexadecanoyl-sn-glycero-3-phosphocholine + hexadecanoate + H(+). The enzyme catalyses 1-hexadecanoyl-2-(9Z-octadecenoyl)-sn-glycero-3-phosphocholine + H2O = 1-hexadecanoyl-sn-glycero-3-phosphocholine + (9Z)-octadecenoate + H(+). It carries out the reaction 1-hexadecanoyl-2-(9Z,12Z-octadecadienoyl)-sn-glycero-3-phosphocholine + H2O = (9Z,12Z)-octadecadienoate + 1-hexadecanoyl-sn-glycero-3-phosphocholine + H(+). The catalysed reaction is 1-hexadecanoyl-2-(5Z,8Z,11Z,14Z-eicosatetraenoyl)-sn-glycero-3-phosphocholine + H2O = 1-hexadecanoyl-sn-glycero-3-phosphocholine + (5Z,8Z,11Z,14Z)-eicosatetraenoate + H(+). It catalyses the reaction 1-octadecanoyl-2-(5Z,8Z,11Z,14Z-eicosatetraenoyl)-sn-glycero-3-phosphocholine + H2O = 1-octadecanoyl-sn-glycero-3-phosphocholine + (5Z,8Z,11Z,14Z)-eicosatetraenoate + H(+). The enzyme catalyses 1-hexadecanoyl-2-(5Z,8Z,11Z,14Z-eicosatetraenoyl)-sn-glycero-3-phosphoethanolamine + H2O = 1-hexadecanoyl-sn-glycero-3-phosphoethanolamine + (5Z,8Z,11Z,14Z)-eicosatetraenoate + H(+). It carries out the reaction 1,2-dihexadecanoyl-sn-glycero-3-phosphate + H2O = 1-hexadecanoyl-sn-glycero-3-phosphate + hexadecanoate + H(+). The catalysed reaction is a 1-acyl-sn-glycero-3-phosphocholine + H2O = sn-glycerol 3-phosphocholine + a fatty acid + H(+). It catalyses the reaction 1-hexadecanoyl-sn-glycero-3-phosphocholine + H2O = sn-glycerol 3-phosphocholine + hexadecanoate + H(+). The enzyme catalyses 1-(5Z,8Z,11Z,14Z-eicosatetraenoyl)-sn-glycero-3-phosphocholine + H2O = sn-glycerol 3-phosphocholine + (5Z,8Z,11Z,14Z)-eicosatetraenoate + H(+). It carries out the reaction 2-(5Z,8Z,11Z,14Z)-eicosatetraenoyl-sn-glycero-3-phosphocholine + H2O = sn-glycerol 3-phosphocholine + (5Z,8Z,11Z,14Z)-eicosatetraenoate + H(+). The catalysed reaction is 1-O-hexadecyl-2-(5Z,8Z,11Z,14Z)-eicosatetraenoyl-sn-glycero-3-phosphocholine + H2O = 1-O-hexadecyl-sn-glycero-3-phosphocholine + (5Z,8Z,11Z,14Z)-eicosatetraenoate + H(+). It catalyses the reaction 1-O-hexadecyl-2-acetyl-sn-glycero-3-phosphocholine + H2O = 1-O-hexadecyl-sn-glycero-3-phosphocholine + acetate + H(+). The enzyme catalyses hexadecanoyl-CoA + H2O = hexadecanoate + CoA + H(+). It carries out the reaction 1',3'-bis[1,2-di-(9Z-octadecenoyl)-sn-glycero-3-phospho]-glycerol + H2O = 1'-[1,2-di-(9Z-octadecenoyl)-sn-glycero-3-phospho]-3'-[1-(9Z-octadecenoyl)-sn-glycero-3-phospho]-glycerol + (9Z)-octadecenoate + H(+). The catalysed reaction is 1'-[1,2-di-(9Z-octadecenoyl)-sn-glycero-3-phospho]-3'-[1-(9Z-octadecenoyl)-sn-glycero-3-phospho]-glycerol + H2O = 1',3'-bis-[1-(9Z-octadecenoyl)-sn-glycero-3-phospho]-glycerol + (9Z)-octadecenoate + H(+). It catalyses the reaction 1',3'-bis-[1,2-di-(9Z,12Z-octadecadienoyl)-sn-glycero-3-phospho]-glycerol + H2O = 1'-[1,2-di-(9Z,12Z-octadecadienoyl)-sn-glycero-3-phospho]-3'-[1-(9Z,12Z-octadecadienoyl)-sn-glycero-3-phospho]-glycerol + (9Z,12Z)-octadecadienoate + H(+). The enzyme catalyses 1-octadecanoyl-2-(15-hydroxy-(5Z,8Z,11Z,13E)-eicosatetraenoyl)-sn-glycero-3-phosphoethanolamine + H2O = 1-octadecanoyl-sn-glycero-3-phosphoethanolamine + 15-hydroxy-(5Z,8Z,11Z,13E)-eicosatetraenoate + H(+). Its activity is regulated as follows. Activated by ATP. Inhibited by calcium-activated calmodulin. Inhibited by bromoenol lactone (BEL). Its function is as follows. Calcium-independent phospholipase involved in phospholipid remodeling with implications in cellular membrane homeostasis, mitochondrial integrity and signal transduction. Hydrolyzes the ester bond of the fatty acyl group attached at sn-1 or sn-2 position of phospholipids (phospholipase A1 and A2 activity respectively), producing lysophospholipids that are used in deacylation-reacylation cycles. Hydrolyzes both saturated and unsaturated long fatty acyl chains in various glycerophospholipid classes such as phosphatidylcholines, phosphatidylethanolamines and phosphatidates, with a preference for hydrolysis at sn-2 position. Can further hydrolyze lysophospholipids carrying saturated fatty acyl chains (lysophospholipase activity). Upon oxidative stress, contributes to remodeling of mitochondrial phospholipids in pancreatic beta cells, in a repair mechanism to reduce oxidized lipid content. Preferentially hydrolyzes oxidized polyunsaturated fatty acyl chains from cardiolipins, yielding monolysocardiolipins that can be reacylated with unoxidized fatty acyls to regenerate native cardiolipin species. Hydrolyzes oxidized glycerophosphoethanolamines present in pancreatic islets, releasing oxidized polyunsaturated fatty acids such as hydroxyeicosatetraenoates (HETEs). Has thioesterase activity toward fatty-acyl CoA releasing CoA-SH known to facilitate fatty acid transport and beta-oxidation in mitochondria particularly in skeletal muscle. Plays a role in regulation of membrane dynamics and homeostasis. Selectively hydrolyzes sn-2 arachidonoyl group in plasmalogen phospholipids, structural components of lipid rafts and myelin. Regulates F-actin polymerization at the pseudopods, which is required for both speed and directionality of MCP1/CCL2-induced monocyte chemotaxis. Targets membrane phospholipids to produce potent lipid signaling messengers. Generates lysophosphatidate (LPA, 1-acyl-glycerol-3-phosphate), which acts via G-protein receptors in various cell types. Has phospholipase A2 activity toward platelet-activating factor (PAF, 1-O-alkyl-2-acetyl-sn-glycero-3-phosphocholine), likely playing a role in inactivation of this potent pro-inflammatory signaling lipid. In response to glucose, amplifies calcium influx in pancreatic beta cells to promote INS secretion. The chain is 85/88 kDa calcium-independent phospholipase A2 (Pla2g6) from Rattus norvegicus (Rat).